The sequence spans 87 residues: Small ribosomal subunit protein uS15 (87 aa).

The protein belongs to the universal ribosomal protein uS15 family. As to quaternary structure, part of the 30S ribosomal subunit. Forms a bridge to the 50S subunit in the 70S ribosome, contacting the 23S rRNA.

In terms of biological role, one of the primary rRNA binding proteins, it binds directly to 16S rRNA where it helps nucleate assembly of the platform of the 30S subunit by binding and bridging several RNA helices of the 16S rRNA. Its function is as follows. Forms an intersubunit bridge (bridge B4) with the 23S rRNA of the 50S subunit in the ribosome. The protein is Small ribosomal subunit protein uS15 of Clostridium acetobutylicum (strain ATCC 824 / DSM 792 / JCM 1419 / IAM 19013 / LMG 5710 / NBRC 13948 / NRRL B-527 / VKM B-1787 / 2291 / W).